The chain runs to 97 residues: uncharacterized protein (97 aa).

The next 3 membrane-spanning stretches (helical) occupy residues 5 to 25, 27 to 47, and 77 to 97; these read TLVAIVVFFGNGEPFHVSLSV, MVFVLLLSSTRIHEVVVLICY, and IISINDICIYGCIALTVVFIL.

It is found in the membrane. This is an uncharacterized protein from Saccharomyces cerevisiae (strain ATCC 204508 / S288c) (Baker's yeast).